We begin with the raw amino-acid sequence, 29 residues long: LICYNDHGYTGKTTETCENGETTCYEKSR.

A disulfide bridge connects residues cysteine 3 and cysteine 24.

As to expression, expressed by the venom gland.

The protein resides in the secreted. Functionally, binds to muscle nicotinic acetylcholine receptor (nAChR) and inhibit acetylcholine from binding to the receptor, thereby impairing neuromuscular transmission. The sequence is that of Frontoxin VI from Micrurus frontalis (Coral snake).